A 432-amino-acid polypeptide reads, in one-letter code: Cyclic GMP-AMP synthase (432 aa).

Position 110–115 (110–115 (QGSFQY)) interacts with GTP. D129 and D131 together coordinate Mg(2+). Residue R180 participates in ATP binding. D191 provides a ligand contact to Mg(2+). S255 contacts ATP. Residues K283, S297, and D344 each contribute to the GTP site. A disordered region spans residues 413–432 (LNAPSKEPSSKPINKTMVSG). Over residues 423-432 (KPINKTMVSG) the composition is skewed to polar residues.

Belongs to the CD-NTase family. A01 subfamily. The cofactor is Mg(2+).

The catalysed reaction is GTP + ATP = 3',3'-cGAMP + 2 diphosphate. Cyclic nucleotide synthase (second messenger synthase) of a CBASS antivirus system. CBASS (cyclic oligonucleotide-based antiphage signaling system) provides immunity against bacteriophage. The CD-NTase protein synthesizes cyclic nucleotides in response to infection; these serve as specific second messenger signals. The signals activate a diverse range of effectors, leading to bacterial cell death and thus abortive phage infection. A type II-C(GA) CBASS system. In terms of biological role, catalyzes the synthesis of 3'3'-cyclic GMP-AMP (3'3'-cGAMP) from GTP and ATP, a second messenger in cell signal transduction. Is also able to produce c-di-AMP and c-di-GMP from ATP and GTP, respectively; however, 3'3'-cGAMP is the dominant molecule produced by DncV in vivo, contrary to the 2'3'-cGAMP produced by eukaryotes. By producing cGAMP, down-regulates csgD expression and expression of flagellum regulon genes, which leads to the down-regulation of rdar biofilm formation and flagellum-mediated swimming and swarming motility in a temperature-dependent manner. Controls the activity of cGAMP-activated phospholipase CapV, a patatin-like lipase that is a direct 3',3'-cGAMP receptor encoded in the dncV operon. The chain is Cyclic GMP-AMP synthase from Escherichia coli.